Consider the following 418-residue polypeptide: Homoaconitase large subunit (418 aa).

The [4Fe-4S] cluster site is built by C292, C352, and C355.

This sequence belongs to the aconitase/IPM isomerase family. Heterodimer of HacA and HacB. It depends on [4Fe-4S] cluster as a cofactor.

It carries out the reaction (2R,3S)-homoisocitrate = cis-homoaconitate + H2O. The protein operates within amino-acid biosynthesis; L-lysine biosynthesis via AAA pathway; L-alpha-aminoadipate from 2-oxoglutarate: step 3/5. Its activity is regulated as follows. Is not inhibited by lysine. Its function is as follows. Catalyzes the reversible hydration of cis-homoaconitate ((Z)-but-1-ene-1,2,4-tricarboxylate) to homoisocitrate ((1R,2S)-1-hydroxybutane-1,2,4-tricarboxylate). Can catalyze neither the dehydration of (R)-homocitrate ((2R)-2-hydroxybutane-1,2,4-tricarboxylate) into cis-homoaconitate in vitro, nor the reverse reaction. Is not active toward (S)-homocitrate, cis-aconitate or citrate as substrate. The polypeptide is Homoaconitase large subunit (hacA) (Thermus thermophilus (strain ATCC BAA-163 / DSM 7039 / HB27)).